The chain runs to 485 residues: GlcNAc-binding protein A (485 aa).

A signal peptide spans M1–G23. The 178-residue stretch at H24–F201 folds into the Chitin-binding type-4 domain. The Chitin-binding type-3 domain occupies A437–W478.

It belongs to the GbpA family.

It localises to the secreted. Probably interacts with GlcNAc residues. May promote attachment to both epithelial cell surfaces and chitin. The sequence is that of GlcNAc-binding protein A from Vibrio cholerae serotype O1 (strain ATCC 39541 / Classical Ogawa 395 / O395).